The primary structure comprises 213 residues: Superoxide dismutase [Mn] (213 aa).

The Mn(2+) site is built by His-27, His-82, Asp-168, and His-172.

It belongs to the iron/manganese superoxide dismutase family. As to quaternary structure, homodimer. The cofactor is Mn(2+).

The catalysed reaction is 2 superoxide + 2 H(+) = H2O2 + O2. Functionally, destroys superoxide anion radicals which are normally produced within the cells and which are toxic to biological systems. The polypeptide is Superoxide dismutase [Mn] (sodA) (Mannheimia haemolytica (Pasteurella haemolytica)).